Reading from the N-terminus, the 100-residue chain is Putative pterin-4-alpha-carbinolamine dehydratase (100 aa).

This sequence belongs to the pterin-4-alpha-carbinolamine dehydratase family.

The catalysed reaction is (4aS,6R)-4a-hydroxy-L-erythro-5,6,7,8-tetrahydrobiopterin = (6R)-L-erythro-6,7-dihydrobiopterin + H2O. This Rhodopseudomonas palustris (strain ATCC BAA-98 / CGA009) protein is Putative pterin-4-alpha-carbinolamine dehydratase.